A 228-amino-acid polypeptide reads, in one-letter code: Ribose-5-phosphate isomerase A (228 aa).

Substrate contacts are provided by residues 28-31, 84-87, and 97-100; these read TGST, DGAD, and KGGG. Glutamate 106 serves as the catalytic Proton acceptor. Lysine 124 is a binding site for substrate.

It belongs to the ribose 5-phosphate isomerase family. As to quaternary structure, homodimer.

The enzyme catalyses aldehydo-D-ribose 5-phosphate = D-ribulose 5-phosphate. Its pathway is carbohydrate degradation; pentose phosphate pathway; D-ribose 5-phosphate from D-ribulose 5-phosphate (non-oxidative stage): step 1/1. Catalyzes the reversible conversion of ribose-5-phosphate to ribulose 5-phosphate. The polypeptide is Ribose-5-phosphate isomerase A (Levilactobacillus brevis (strain ATCC 367 / BCRC 12310 / CIP 105137 / JCM 1170 / LMG 11437 / NCIMB 947 / NCTC 947) (Lactobacillus brevis)).